Here is a 118-residue protein sequence, read N- to C-terminus: DNA-directed RNA polymerase subunit omega (118 aa).

The protein belongs to the RNA polymerase subunit omega family. The RNAP catalytic core consists of 2 alpha, 1 beta, 1 beta' and 1 omega subunit. When a sigma factor is associated with the core the holoenzyme is formed, which can initiate transcription.

The catalysed reaction is RNA(n) + a ribonucleoside 5'-triphosphate = RNA(n+1) + diphosphate. Its function is as follows. Promotes RNA polymerase assembly. Latches the N- and C-terminal regions of the beta' subunit thereby facilitating its interaction with the beta and alpha subunits. This is DNA-directed RNA polymerase subunit omega from Paracoccus denitrificans (strain Pd 1222).